A 334-amino-acid chain; its full sequence is Biotin synthase (334 aa).

Residues 48–275 form the Radical SAM core domain; it reads NQVQTSQLLS…RSMVRLSAGR (228 aa). Cys-63, Cys-67, and Cys-70 together coordinate [4Fe-4S] cluster. Positions 107, 138, 198, and 270 each coordinate [2Fe-2S] cluster.

It belongs to the radical SAM superfamily. Biotin synthase family. Homodimer. It depends on [4Fe-4S] cluster as a cofactor. The cofactor is [2Fe-2S] cluster.

It carries out the reaction (4R,5S)-dethiobiotin + (sulfur carrier)-SH + 2 reduced [2Fe-2S]-[ferredoxin] + 2 S-adenosyl-L-methionine = (sulfur carrier)-H + biotin + 2 5'-deoxyadenosine + 2 L-methionine + 2 oxidized [2Fe-2S]-[ferredoxin]. Its pathway is cofactor biosynthesis; biotin biosynthesis; biotin from 7,8-diaminononanoate: step 2/2. In terms of biological role, catalyzes the conversion of dethiobiotin (DTB) to biotin by the insertion of a sulfur atom into dethiobiotin via a radical-based mechanism. The sequence is that of Biotin synthase from Maricaulis maris (strain MCS10) (Caulobacter maris).